The chain runs to 150 residues: D-aminoacyl-tRNA deacylase (150 aa).

Residues Gly138–Pro139 carry the Gly-cisPro motif, important for rejection of L-amino acids motif.

The protein belongs to the DTD family. As to quaternary structure, homodimer.

It localises to the cytoplasm. It carries out the reaction glycyl-tRNA(Ala) + H2O = tRNA(Ala) + glycine + H(+). The enzyme catalyses a D-aminoacyl-tRNA + H2O = a tRNA + a D-alpha-amino acid + H(+). Its function is as follows. An aminoacyl-tRNA editing enzyme that deacylates mischarged D-aminoacyl-tRNAs. Also deacylates mischarged glycyl-tRNA(Ala), protecting cells against glycine mischarging by AlaRS. Acts via tRNA-based rather than protein-based catalysis; rejects L-amino acids rather than detecting D-amino acids in the active site. By recycling D-aminoacyl-tRNA to D-amino acids and free tRNA molecules, this enzyme counteracts the toxicity associated with the formation of D-aminoacyl-tRNA entities in vivo and helps enforce protein L-homochirality. The chain is D-aminoacyl-tRNA deacylase from Sorangium cellulosum (strain So ce56) (Polyangium cellulosum (strain So ce56)).